The sequence spans 229 residues: Nectarin-1 (229 aa).

The first 32 residues, 1–32 (MAAFGIKSKIFQIMEMTILFLFAISIDRYCFA), serve as a signal peptide directing secretion. Cys42 and Cys57 form a disulfide bridge. N-linked (GlcNAc...) asparagine glycosylation is present at Asn60. The 149-residue stretch at 69–217 (FAISKPGATN…TFQINIEDVQ (149 aa)) folds into the Cupin type-1 domain. Residues His117, His119, Glu124, and His163 each coordinate Mn(2+).

This sequence belongs to the germin family. In terms of assembly, monomer. In the absence of manganese, it forms tetrameric and pentameric forms which show superoxide dismutase activity. Requires Mn(2+) as cofactor. Glycosylated.

It is found in the secreted. It localises to the extracellular space. Its subcellular location is the apoplast. It carries out the reaction 2 superoxide + 2 H(+) = H2O2 + O2. Functionally, may interact with bacterial adhesins thereby protecting the reproductive tissues from microbial attack. Has no oxalate oxidase activity. This Nicotiana plumbaginifolia (Leadwort-leaved tobacco) protein is Nectarin-1 (NEC1).